The sequence spans 1131 residues: MADIKEGVEEGSVKVDMIKEPLTQGDTGVDEVDFAKITLDDAFKYLNCNKHGLSSAEAAARLQQHGPNKLPDSSRNPVLVFLGYMWNPLAWAMEAAAIISIALLDVADFVLIVGLLLINAIISFYEESNADKAIKALTAALAPKAMVVRDGAIVTIDAVNLVPGDVILIRLGNIVPADVKLLEEEGADEGEQEAPMQIDQAALTGESLPAKKFTGDVAFSGSSIKQGERHAVVYATGVNTFFGRAAALISGTNNVSNLQTVMNKMSAICIVTILLWVVVELAVQFGHYSHECVGGREGCPTLLNMLVVLVGGIPIAMPTVLSVTLALGAYKLAREGAIVTRMSAVEEMAGMDVLCSDKTGTLTLNKLSIDKSMVVPVGNMGVDEIMRMGALSANTVTEEPIDMVLWESYPDRETIKRDYKHTKYFPFNPNDKITIATCLEIATGRVFRVLKGSPQVVLAKAWNAAELDATVNQKMVEFANRGFRALGLAMADGDGKDGTKWEMLALLPLFDPPRHDTKETIEHCQNQGIQVKMITGDHLLIGKETAKMLGMGTEMFPSEVMIKARNGDASQLHGYKNFVEMVETCNGFAQVFPEHKFEIVKILQDSNHVVGMTGDGVNDAPALKKADVGVAVADATDAARGAADIVLTEPGLSTIVTAVIGARKIFQRMTTYSKYTIAMTFRICFTFGLITVIYDWYFPTILIVIMAVFNDGAMIALSKDRVVASKTPNSWNITNIFIMGMVYGLYLTLSTWALYQTATKTTFFEDKTPLHSLNDQYSVLQPWCEDEVRAKLGQTIDPYASLCESNSYAKQFDECEGYQKGSGVQVEDVPTLHAQCVTEQRYLRGAMTRSLIYTQVSISGQALVFVVRTAGYSLMERAGTSTYLAFFFAQVGATLFGIFGLGGFEKPRHQLEDCQFCDYSFHEPVDWFDSGIVPESGTESDFTASVIGCGGYVIVAWIWSAIWYVLLDPIKWILFWILNEEGFRDTMSWRESTKRSLDRRSKDDIGDKEFTGPSGMVPANYSNPLGRASMSKPVSAVLDRKSASLVAINRNSMTVSQDPNRALNIGRRSMIGRPSGPVGRTSMPLGRISRTSNTLSTGSKDGQIGRGSKPLNSSSAEIKPDKYDFASTIRE.

6 helical membrane-spanning segments follow: residues 77–97 (PVLV…EAAA), 98–118 (IISI…LLLI), 151–171 (GAIV…LIRL), 231–251 (AVVY…LISG), 265–285 (MSAI…AVQF), and 305–325 (MLVV…SVTL). The 4-aspartylphosphate intermediate role is filled by Asp357. Residues Asp615 and Asp619 each contribute to the Mg(2+) site. 5 helical membrane passes run 642 to 662 (AADI…VIGA), 689 to 709 (LITV…MAVF), 733 to 753 (ITNI…STWA), 884 to 904 (LAFF…LGGF), and 946 to 966 (VIGC…WYVL). A compositionally biased stretch (basic and acidic residues) spans 994 to 1010 (KRSLDRRSKDDIGDKEF). 2 disordered regions span residues 994–1023 (KRSL…NYSN) and 1067–1131 (RRSM…TIRE). Residues 1089–1100 (SRTSNTLSTGSK) show a composition bias toward polar residues. Basic and acidic residues predominate over residues 1118–1131 (IKPDKYDFASTIRE).

This sequence belongs to the cation transport ATPase (P-type) (TC 3.A.3) family. Type IIIA subfamily.

It is found in the cell membrane. It carries out the reaction ATP + H2O + H(+)(in) = ADP + phosphate + 2 H(+)(out). Functionally, the plasma membrane ATPase of plants and fungi is a hydrogen ion pump. The proton gradient it generates drives the active transport of nutrients by H(+)-symport. The resulting external acidification and/or internal alkinization may mediate growth responses. This Dunaliella bioculata (Green alga) protein is Plasma membrane ATPase (PMA1).